A 110-amino-acid polypeptide reads, in one-letter code: Endoribonuclease SymE (110 aa).

The SpoVT-AbrB domain maps to 29-74 (SRYPEYTRIPAITLKGQWLEDAGFTTGTQVDVRVMNGCIVLTAQQP).

It belongs to the SymE family.

Its subcellular location is the cytoplasm. In terms of biological role, involved in the degradation and recycling of damaged RNA. It is itself a target for degradation by the ATP-dependent protease Lon. In Salmonella paratyphi C (strain RKS4594), this protein is Endoribonuclease SymE.